The sequence spans 261 residues: Taurine import ATP-binding protein TauB (261 aa).

The ABC transporter domain occupies 4–233 (LQLEGIGAHY…RYSAGESARA (230 aa)). Position 38–45 (38–45 (GPSGSGKT)) interacts with ATP.

Belongs to the ABC transporter superfamily. Taurine importer (TC 3.A.1.17.1) family. As to quaternary structure, the complex is composed of two ATP-binding proteins (TauB), two transmembrane proteins (TauC) and a solute-binding protein (TauA).

The protein localises to the cell inner membrane. It catalyses the reaction taurine(out) + ATP + H2O = taurine(in) + ADP + phosphate + H(+). In terms of biological role, part of the ABC transporter complex TauABC involved in taurine import. Responsible for energy coupling to the transport system. The polypeptide is Taurine import ATP-binding protein TauB (Pseudomonas syringae pv. tomato (strain ATCC BAA-871 / DC3000)).